The chain runs to 1715 residues: Ubiquitin carboxyl-terminal hydrolase 32 (1715 aa).

2 consecutive EF-hand domains span residues 161–196 (IPKNALAGLFNAFDENRDGHIDFKELCCGVSAACRG) and 197–232 (PGVERTRFCFKIFDVDRDGVLSHDETLQMINVLLLV). Residues aspartate 174, asparagine 176, aspartate 178, histidine 180, glutamate 185, aspartate 210, aspartate 212, aspartate 214, and glutamate 221 each contribute to the Ca(2+) site. In terms of domain architecture, DUSP spans 314-492 (QCKHMENDIV…DNLPLPRQVI (179 aa)). The segment at 393–429 (QHDSYSLGSGTGSASGSGSASSGISAGRHCGPVRPGP) is disordered. Residues 408-419 (GSGSASSGISAG) are compositionally biased toward low complexity. The USP domain maps to 677 to 1675 (TGLHNLGNTC…AAYLLFYERK (999 aa)). Cysteine 686 functions as the Nucleophile in the catalytic mechanism. Polar residues-rich tracts occupy residues 1103–1126 (TESNTSSMSYTNHSGENSMESSLT) and 1150–1164 (YRTSPNDSSGLSTGH). 2 disordered regions span residues 1103 to 1213 (TESN…PHKA) and 1536 to 1569 (DEIDAPSKEVKEELPNQTGSTKATASPPPTGNIL). Positions 1171-1180 (DVDEQAEEGN) are enriched in acidic residues. Positions 1188-1209 (DQITTSQPETSSGVYSRRSSQP) are enriched in polar residues. Over residues 1540 to 1549 (APSKEVKEEL) the composition is skewed to basic and acidic residues. The span at 1550–1559 (PNQTGSTKAT) shows a compositional bias: polar residues. Histidine 1633 functions as the Proton acceptor in the catalytic mechanism.

Belongs to the peptidase C19 family. USP20/USP33 subfamily.

It carries out the reaction Thiol-dependent hydrolysis of ester, thioester, amide, peptide and isopeptide bonds formed by the C-terminal Gly of ubiquitin (a 76-residue protein attached to proteins as an intracellular targeting signal).. In terms of biological role, deubiquitinating enzyme that acts as an inhibitor of mitophagy probably by counteracting the action of park. Possibly functions by hydrolyzing ubiquitin attached by park on target proteins, thereby reducing park's ability to drive mitophagy. This is Ubiquitin carboxyl-terminal hydrolase 32 from Drosophila melanogaster (Fruit fly).